Reading from the N-terminus, the 63-residue chain is Beta-defensin 38 (63 aa).

An N-terminal signal peptide occupies residues 1–21; it reads MKISCFLLLVLSLYLFQVNQA. Intrachain disulfides connect C29–C58, C36–C51, and C41–C59.

This sequence belongs to the beta-defensin family.

It localises to the secreted. Has antibacterial activity. In Rattus norvegicus (Rat), this protein is Beta-defensin 38 (Defb38).